The following is a 268-amino-acid chain: Hydroxypyruvate/pyruvate aldolase (268 aa).

The active-site Proton acceptor is the His48. Glu152 and Asp178 together coordinate a divalent metal cation.

The protein belongs to the HpcH/HpaI aldolase family. Requires Mn(2+) as cofactor. Mg(2+) serves as cofactor. The cofactor is Co(2+).

The catalysed reaction is D-glyceraldehyde + 3-hydroxypyruvate = (3R,4S,5R)-3,4,5,6-tetrahydroxy-2-oxohexanoate. The enzyme catalyses D-glyceraldehyde + 3-hydroxypyruvate = 2-dehydro-D-gluconate. It carries out the reaction D-glyceraldehyde + 3-hydroxypyruvate = 2-dehydro-D-galactonate. It catalyses the reaction D-glyceraldehyde + pyruvate = 2-dehydro-3-deoxy-L-galactonate. The catalysed reaction is 2-dehydro-3-deoxy-D-gluconate = D-glyceraldehyde + pyruvate. In terms of biological role, aldolase which can catalyze in vitro the aldolisation reaction between hydroxypyruvate (HPA) or pyruvate (PA) and D-glyceraldehyde (D-GA). The condensation of hydroxypyruvate and D-glyceraldehyde produces (3R,4S,5R)-3,4,5,6-tetrahydroxy-2-oxohexanoate as the major product, 2-dehydro-D-gluconate and 2-dehydro-D-galactonate. The condensation of pyruvate and D-glyceraldehyde produces 2-dehydro-3-deoxy-L-galactonate as the major product and 2-dehydro-3-deoxy-D-gluconate. Also catalyzes the retro-aldol type decarboxylation of oxaloacetate, a general property of known pyruvate aldolases. This chain is Hydroxypyruvate/pyruvate aldolase, found in Pseudomonas aeruginosa.